The chain runs to 101 residues: MTKSELIEILARRQAHLKADDVDLAVKSLLEMMGGSLSAGDRIEIRGFGSFSLHYRPPRLGRNPKTGESVALPGKHVPHFKPGKELRERVSSVLPLDADPA.

The interval 62 to 84 is disordered; it reads RNPKTGESVALPGKHVPHFKPGK.

Belongs to the bacterial histone-like protein family. In terms of assembly, heterodimer of an alpha and a beta chain.

In terms of biological role, this protein is one of the two subunits of integration host factor, a specific DNA-binding protein that functions in genetic recombination as well as in transcriptional and translational control. The polypeptide is Integration host factor subunit beta (Stenotrophomonas maltophilia (strain K279a)).